The chain runs to 199 residues: Isopentenyl-diphosphate Delta-isomerase (199 aa).

Mn(2+) is bound by residues His40 and His47. Positions 45-186 (PRHLAFSCHV…PALLSPWAVE (142 aa)) constitute a Nudix hydrolase domain. Residue Cys82 is part of the active site. Cys82 serves as a coordination point for Mg(2+). Residue His84 participates in Mn(2+) binding. Residue Glu102 participates in Mg(2+) binding. Residues Glu131 and Glu133 each coordinate Mn(2+). Glu133 is an active-site residue.

Belongs to the IPP isomerase type 1 family. Mg(2+) is required as a cofactor. Mn(2+) serves as cofactor.

Its subcellular location is the cytoplasm. The catalysed reaction is isopentenyl diphosphate = dimethylallyl diphosphate. It participates in isoprenoid biosynthesis; dimethylallyl diphosphate biosynthesis; dimethylallyl diphosphate from isopentenyl diphosphate: step 1/1. Functionally, catalyzes the 1,3-allylic rearrangement of the homoallylic substrate isopentenyl (IPP) to its highly electrophilic allylic isomer, dimethylallyl diphosphate (DMAPP). This is Isopentenyl-diphosphate Delta-isomerase from Cutibacterium acnes (strain DSM 16379 / KPA171202) (Propionibacterium acnes).